A 296-amino-acid polypeptide reads, in one-letter code: Protoheme IX farnesyltransferase (296 aa).

9 helical membrane-spanning segments follow: residues 13-33 (IIFGNLISVVGGFLLAAKGII), 35-55 (YPLFLATLVGVSLVVASGCVF), 84-104 (VTLIYATVLGIAGFVLLYIAA), 107-127 (LAMWLAVMGFVVYVGVYSLYM), 132-152 (VYGTLIGSLSGAAPPVIGYCA), 162-182 (LILLAIFSLWQMPHSYAIAIF), 208-228 (ITLYILAFMIATLMLALVGYA), 229-249 (GYKYLIVAAVVSIWWLGMALR), and 264-284 (FVFSIVAITSLSVMMSIDFSV).

Belongs to the UbiA prenyltransferase family. Protoheme IX farnesyltransferase subfamily.

The protein localises to the cell inner membrane. It catalyses the reaction heme b + (2E,6E)-farnesyl diphosphate + H2O = Fe(II)-heme o + diphosphate. The protein operates within porphyrin-containing compound metabolism; heme O biosynthesis; heme O from protoheme: step 1/1. Converts heme B (protoheme IX) to heme O by substitution of the vinyl group on carbon 2 of heme B porphyrin ring with a hydroxyethyl farnesyl side group. The sequence is that of Protoheme IX farnesyltransferase from Edwardsiella ictaluri (strain 93-146).